The chain runs to 445 residues: Argininosuccinate synthase (445 aa).

Residues 17–25 (AFSGGLDTS) and alanine 43 each bind ATP. Tyrosine 99 provides a ligand contact to L-citrulline. ATP-binding residues include glycine 129 and threonine 131. Residues threonine 131, asparagine 135, and aspartate 136 each coordinate L-aspartate. Asparagine 135 is a binding site for L-citrulline. Residue aspartate 136 participates in ATP binding. Arginine 139 and serine 192 together coordinate L-citrulline. Aspartate 194 contributes to the ATP binding site. The L-citrulline site is built by threonine 201, glutamate 203, and glutamate 280.

Belongs to the argininosuccinate synthase family. Type 2 subfamily. In terms of assembly, homotetramer.

It localises to the cytoplasm. It catalyses the reaction L-citrulline + L-aspartate + ATP = 2-(N(omega)-L-arginino)succinate + AMP + diphosphate + H(+). Its pathway is amino-acid biosynthesis; L-arginine biosynthesis; L-arginine from L-ornithine and carbamoyl phosphate: step 2/3. The protein is Argininosuccinate synthase of Gemmatimonas aurantiaca (strain DSM 14586 / JCM 11422 / NBRC 100505 / T-27).